We begin with the raw amino-acid sequence, 511 residues long: 2-methylbutanal oxime monooxygenase (511 aa).

2 helical membrane passes run 10 to 30 (PPQWLSILAVFLLPILTLLLF) and 304 to 324 (ILMNVFVGGIDTSAVTITWAF). Heme is bound at residue Cys-451.

This sequence belongs to the cytochrome P450 family. Heme is required as a cofactor. As to expression, expressed in storage roots, primary roots, petioles and vascular tissues. Expressed in the outer cortex cells, the endodermis and around the xylem, phloem cells and laticifers.

It localises to the microsome membrane. The enzyme catalyses (1E,2S)-2-methylbutanal oxime + reduced [NADPH--hemoprotein reductase] + O2 = 2-hydroxy-2-methylbutanenitrile + oxidized [NADPH--hemoprotein reductase] + 2 H2O + H(+). The catalysed reaction is (E)-2-methylpropanal oxime + reduced [NADPH--hemoprotein reductase] + O2 = 2-hydroxy-2-methylpropanenitrile + oxidized [NADPH--hemoprotein reductase] + 2 H2O + H(+). Functionally, catalyzes the conversion of (E)-2-methylpropanal oxime (valox) to 2-hydroxy-2-methylpropanenitrile (acetone cyanohydrin) and of (E)-2-methylbutanal oxime (ilox) to 2-hydroxy-2-methylbutyronitrile. The reaction takes place in three steps. First, the oxime is isomerized to the (Z)- isomer, next the (Z)-isomer is dehydrated to the corresponding nitrile, followed by a C-hydroxylation of the nitrile. Can use both aliphatic and aromatic oximes as substrates. The protein is 2-methylbutanal oxime monooxygenase (CYP71E7) of Manihot esculenta (Cassava).